The primary structure comprises 127 residues: Holo-[acyl-carrier-protein] synthase (127 aa).

Mg(2+) is bound by residues aspartate 7 and glutamate 53.

This sequence belongs to the P-Pant transferase superfamily. AcpS family. Requires Mg(2+) as cofactor.

Its subcellular location is the cytoplasm. It catalyses the reaction apo-[ACP] + CoA = holo-[ACP] + adenosine 3',5'-bisphosphate + H(+). Functionally, transfers the 4'-phosphopantetheine moiety from coenzyme A to a Ser of acyl-carrier-protein. This chain is Holo-[acyl-carrier-protein] synthase, found in Herpetosiphon aurantiacus (strain ATCC 23779 / DSM 785 / 114-95).